A 680-amino-acid chain; its full sequence is Glutamine-dependent NAD(+) synthetase (680 aa).

A CN hydrolase domain is found at 12–276 (VRVAACTHHA…EHRSVADVDT (265 aa)). Glu-52 (proton acceptor; for glutaminase activity) is an active-site residue. The active-site For glutaminase activity is the Lys-121. Tyr-127 lines the L-glutamine pocket. Catalysis depends on Cys-176, which acts as the Nucleophile; for glutaminase activity. Ser-203 and Arg-209 together coordinate L-glutamine. 366–373 (GVSGGLDS) provides a ligand contact to ATP. Position 456 (Asn-456) interacts with deamido-NAD(+). Thr-480 contributes to the ATP binding site. Residues Glu-485, 490 to 493 (WSTY), and Lys-636 each bind deamido-NAD(+).

In the C-terminal section; belongs to the NAD synthetase family.

The catalysed reaction is deamido-NAD(+) + L-glutamine + ATP + H2O = L-glutamate + AMP + diphosphate + NAD(+) + H(+). The protein operates within cofactor biosynthesis; NAD(+) biosynthesis; NAD(+) from deamido-NAD(+) (L-Gln route): step 1/1. Its function is as follows. Catalyzes the ATP-dependent amidation of deamido-NAD to form NAD. Uses L-glutamine as a nitrogen source. This chain is Glutamine-dependent NAD(+) synthetase, found in Mycobacterium leprae (strain TN).